The chain runs to 150 residues: UPF0756 membrane protein PC1_1142 (150 aa).

Helical transmembrane passes span 1 to 21 (MAYL…GIIS), 51 to 71 (YGLS…IASG), 82 to 102 (FLHW…WLGG), and 127 to 147 (ALFR…SLLI).

The protein belongs to the UPF0756 family.

The protein resides in the cell membrane. The polypeptide is UPF0756 membrane protein PC1_1142 (Pectobacterium carotovorum subsp. carotovorum (strain PC1)).